The chain runs to 558 residues: Nucleoprotein (558 aa).

Residues 54–237 form a binding site for the cap structure m7GTP region; the sequence is MRKEKRDDKD…ITEQQSSINI (184 aa). Mg(2+)-binding residues include D382 and E384. Mn(2+) is bound by residues D382 and E384. Positions 392, 499, 502, and 518 each coordinate Zn(2+). A Mg(2+)-binding site is contributed by D522. A Mn(2+)-binding site is contributed by D522.

Belongs to the arenaviridae nucleocapsid protein family. As to quaternary structure, homomultimerizes to form the nucleocapsid. Binds to viral genomic RNA. Interacts with glycoprotein G2. Interacts with protein Z; this interaction probably directs the encapsidated genome to budding sites. Interacts with protein L; this interaction does not interfere with Z-L interaction. Interacts with host IKBKE (via Protein kinase domain); the interaction inhibits IKBKE kinase activity.

The protein resides in the virion. The protein localises to the host cytoplasm. Its function is as follows. Encapsidates the genome, protecting it from nucleases. The encapsidated genomic RNA is termed the nucleocapsid (NC). Serves as template for viral transcription and replication. The increased presence of protein N in host cell does not seem to trigger the switch from transcription to replication as observed in other negative strain RNA viruses. Through the interaction with host IKBKE, strongly inhibits the phosphorylation and nuclear translocation of host IRF3, a protein involved in interferon activation pathway, leading to the inhibition of interferon-beta and IRF3-dependent promoters activation. Also encodes a functional 3'-5' exoribonuclease that degrades preferentially dsRNA substrates and thereby participates in the suppression of interferon induction. The protein is Nucleoprotein of Lymphocytic choriomeningitis virus (strain Armstrong) (LCMV).